A 560-amino-acid chain; its full sequence is IQ motif and ankyrin repeat domain-containing protein 1 (560 aa).

Residues 1–72 (MDSKKGRPKA…DRAARAIQGA (72 aa)) are disordered. An IQ domain is found at 62–91 (EDRAARAIQGAFRQLRARRELARRREERRE). ANK repeat units lie at residues 191–223 (YGNT…SKGA) and 224–253 (FGPT…DPRV). Residues 281–398 (LTEAMLQNME…RLELREQTQE (118 aa)) adopt a coiled-coil conformation.

This chain is IQ motif and ankyrin repeat domain-containing protein 1, found in Homo sapiens (Human).